Consider the following 982-residue polypeptide: ATP-dependent DNA helicase Q5 (982 aa).

The region spanning 39 to 213 is the Helicase ATP-binding domain; it reads MAVVKGAEDV…FAALHLKQPV (175 aa). 52-59 contributes to the ATP binding site; that stretch reads MPTGAGKS. Residues 157 to 160 carry the DEAH box motif; sequence DEAH. One can recognise a Helicase C-terminal domain in the interval 241 to 398; sequence NLRDFCLKAL…NKPSDKATLL (158 aa). C412, C428, C432, and C435 together coordinate Zn(2+). Phosphoserine is present on residues S489 and S492. The segment at 491–621 is interaction with POLR2A; sequence GSGDEGRDEA…ASKDGQLYDM (131 aa). At T527 the chain carries Phosphothreonine. Positions 653–726 are interaction with RAD51; it reads PKRVGAGFSK…ALGSSVNCGD (74 aa). Disordered regions lie at residues 675–797 and 812–893; these read GKSH…PGKC and QTEG…AQEP. S728 bears the Phosphoserine; by CDK1 mark.

This sequence belongs to the helicase family. RecQ subfamily. Monomer. Interacts with TOP2A, TOP3A and TOP3B. Interacts with RNA polymerase II subunit POLR2A. Identified in a complex with the RNA polymerase II core bound to DNA. Interacts with RAD51. Interacts with WRN; this interaction stimulates WRN helicase activity on DNA fork duplexes. Interacts with MUS1; this interaction promotes MUS81-dependent mitotic DNA synthesis. Zn(2+) is required as a cofactor. In terms of processing, phosphorylated by CDK1 at Ser-728; this phosphorylation is required for RECQL5-mediated disruption of RAD51 filaments on stalled replication forks.

It is found in the nucleus. Its subcellular location is the nucleoplasm. The enzyme catalyses Couples ATP hydrolysis with the unwinding of duplex DNA by translocating in the 3'-5' direction.. It catalyses the reaction ATP + H2O = ADP + phosphate + H(+). Functionally, DNA helicase that plays an important role in DNA replication, transcription and repair. Binds to the RNA polymerase II subunit POLR2A during transcription elongation and suppresses transcription-associated genomic instability. Also associates with POLR1A and enforces the stability of ribosomal DNA arrays. Plays an important role in mitotic chromosome separation after cross-over events and cell cycle progress. Mechanistically, removes RAD51 filaments protecting stalled replication forks at common fragile sites and stimulates MUS81-EME1 endonuclease leading to mitotic DNA synthesis. Required for efficient DNA repair, including repair of inter-strand cross-links. Stimulates DNA decatenation mediated by TOP2A. Prevents sister chromatid exchange and homologous recombination. The sequence is that of ATP-dependent DNA helicase Q5 (Recql5) from Mus musculus (Mouse).